Reading from the N-terminus, the 375-residue chain is tRNA-specific 2-thiouridylase MnmA (375 aa).

Residues 12–19 (GMSGGVDS) and Met38 contribute to the ATP site. Residues 98–100 (NPD) are interaction with target base in tRNA. Cys103 (nucleophile) is an active-site residue. Cys103 and Cys200 form a disulfide bridge. Gly127 contributes to the ATP binding site. An interaction with tRNA region spans residues 150–152 (KDQ). Cys200 functions as the Cysteine persulfide intermediate in the catalytic mechanism. The tract at residues 312–313 (RY) is interaction with tRNA.

The protein belongs to the MnmA/TRMU family.

The protein localises to the cytoplasm. It catalyses the reaction S-sulfanyl-L-cysteinyl-[protein] + uridine(34) in tRNA + AH2 + ATP = 2-thiouridine(34) in tRNA + L-cysteinyl-[protein] + A + AMP + diphosphate + H(+). Its function is as follows. Catalyzes the 2-thiolation of uridine at the wobble position (U34) of tRNA, leading to the formation of s(2)U34. This Lactobacillus delbrueckii subsp. bulgaricus (strain ATCC 11842 / DSM 20081 / BCRC 10696 / JCM 1002 / NBRC 13953 / NCIMB 11778 / NCTC 12712 / WDCM 00102 / Lb 14) protein is tRNA-specific 2-thiouridylase MnmA.